The primary structure comprises 271 residues: Calretinin (271 aa).

EF-hand domains lie at 16-51, 63-98, 107-142, 151-186, 195-230, and 235-270; these read LTAT…LEKA, NLGE…EENF, GSST…LLKK, KLQE…QENF, LTSE…LYEK, and MNIQ…SEPP. Residues D29, D31, N33, Y35, E40, D76, N78, D80, K82, E87, D120, D122, S124, Y126, E131, D164, N166, D168, K170, E175, D208, D210, S212, Y214, and E219 each coordinate Ca(2+). Phosphotyrosine is present on Y214.

This sequence belongs to the calbindin family.

The protein resides in the synapse. It localises to the cell projection. The protein localises to the dendrite. Its function is as follows. Calcium-binding protein involved in calcium homeostasis and signal transduction. It plays a critical role in buffering intracellular calcium levels and modulating calcium-dependent signaling pathways. Predominantly expressed in specific neuronal populations, influences synaptic plasticity and neuronal excitability, contributing to learning and memory. During embryonic development, it facilitates neuronal differentiation and maturation. This is Calretinin (CALB2) from Bos taurus (Bovine).